The following is a 208-amino-acid chain: Large ribosomal subunit protein uL3 (208 aa).

It belongs to the universal ribosomal protein uL3 family. As to quaternary structure, part of the 50S ribosomal subunit. Forms a cluster with proteins L14 and L19.

One of the primary rRNA binding proteins, it binds directly near the 3'-end of the 23S rRNA, where it nucleates assembly of the 50S subunit. The protein is Large ribosomal subunit protein uL3 of Salinibacter ruber (strain DSM 13855 / M31).